The primary structure comprises 505 residues: MLSLTIKELVSHFKAKKCSPVDICATCIKEINDSSFLNAFVTVLPEAAEKQARESHARWKSGKPRGPLDGVPIAVKDNFCMTGVRTTCGSRMLANFYPPYTATVVERLQGEGAVVLGKTNMDEFGMGSGATDSAFGPTKNPWKNAGEAADDWYITGGSSGGSAVAVATGCSFGALGSDTGGSTRNPASRCGVVGLKPTYGALSRHGLIPLTNSMDVPGILAKCVDDAAVLLSATACADPNDSTSVSAPDSVRHLKLAGEPSLKGVKIGVPKEYHCPGMCPEVLDLWRDVADRLAALGAVVSSVSLPHSRYSTECYSVLNCCEVASNFARYDGLEYGHRASDDSSTDALYAASRHEGLNEVVRGRILAGNYFLLRANYEKYFTKALQVRRLISDDFTKVFASGVELLLTPVTLTAALRHSEWTLKDNRERASVEDFCTQPVNMAGLPAVSVPCRLSREGLPLSLQLVGPKFSEAAMLAAAKRLELELSFPRLDLQLHAHQESYATL.

Active-site charge relay system residues include Lys-76 and Ser-158. The active-site Acyl-ester intermediate is Ser-182.

The protein belongs to the amidase family. GatA subfamily. In terms of assembly, subunit of the heterotrimeric GatCAB amidotransferase (AdT) complex, composed of A, B and C subunits.

The protein resides in the mitochondrion. The catalysed reaction is L-glutamyl-tRNA(Gln) + L-glutamine + ATP + H2O = L-glutaminyl-tRNA(Gln) + L-glutamate + ADP + phosphate + H(+). Allows the formation of correctly charged Gln-tRNA(Gln) through the transamidation of misacylated Glu-tRNA(Gln) in the mitochondria. The reaction takes place in the presence of glutamine and ATP through an activated gamma-phospho-Glu-tRNA(Gln). The protein is Glutamyl-tRNA(Gln) amidotransferase subunit A, mitochondrial of Ixodes scapularis (Black-legged tick).